A 134-amino-acid polypeptide reads, in one-letter code: DNA-binding protein inhibitor ID-2 (134 aa).

The tract at residues 1 to 24 (MKAFSPVRSVRKNSLSDHGLGISR) is disordered. A phosphoserine mark is found at Ser-14 and Ser-25. Residues 23-75 (SRSKTPVDDPMSLLYNMNDCYSKLKELVPSIPQNKKVSKMEILQHVIDYILDL) form the bHLH domain. Positions 106-115 (LNTDISILSL) match the Nuclear export signal motif.

In terms of assembly, interacts with GATA4 and NKX2-5. Interacts with NR0B2. Interacts with CLOCK and BMAL1. Interacts with IFI204. Interacts with NEDD9/HEF1. Interacts with ASB4; this interaction promotes ID2 proteasomal degradation. In terms of processing, ubiquitinated in a ASB4-depedent manner, leading to proteasomal degradation. Phosphorylated in vitro by CDK1, PKA and PKC.

The protein resides in the cytoplasm. Its subcellular location is the nucleus. Functionally, transcriptional regulator (lacking a basic DNA binding domain) which negatively regulates the basic helix-loop-helix (bHLH) transcription factors by forming heterodimers and inhibiting their DNA binding and transcriptional activity. Implicated in regulating a variety of cellular processes, including cellular growth, senescence, differentiation, apoptosis, angiogenesis, and neoplastic transformation. Inhibits skeletal muscle and cardiac myocyte differentiation. Regulates the circadian clock by repressing the transcriptional activator activity of the CLOCK-BMAL1 heterodimer. Restricts the CLOCK and BMAL1 localization to the cytoplasm. Plays a role in both the input and output pathways of the circadian clock: in the input component, is involved in modulating the magnitude of photic entrainment and in the output component, contributes to the regulation of a variety of liver clock-controlled genes involved in lipid metabolism. In Bos taurus (Bovine), this protein is DNA-binding protein inhibitor ID-2 (ID2).